Reading from the N-terminus, the 171-residue chain is Secreted LysM effector Blys4 (171 aa).

A LysM domain is found at 125-169 (KPYTIHQGDTCWDIAESHSVGVDDILTLNPELDCDKLSIGSQICL).

The protein belongs to the secreted LysM effector family.

Its function is as follows. Might have a role in sequestration of chitin oligosaccharides (breakdown products of fungal cell walls that are released during invasion and act as triggers of host immunity) to dampen host defense. This Beauveria bassiana (strain ARSEF 2860) (White muscardine disease fungus) protein is Secreted LysM effector Blys4.